A 786-amino-acid polypeptide reads, in one-letter code: Phenylalanine--tRNA ligase beta subunit (786 aa).

In terms of domain architecture, tRNA-binding spans 39–150; that stretch reads LRAPDRVVVG…GELKLGKPLH (112 aa). In terms of domain architecture, B5 spans 397-474; it reads YKPATITVDL…RLLGIDTILA (78 aa). Asp-452, Asp-458, Glu-461, and Glu-462 together coordinate Mg(2+). The region spanning 693–786 is the FDX-ACB domain; the sequence is SKFPKLQRDL…LNHRFGAKLR (94 aa).

This sequence belongs to the phenylalanyl-tRNA synthetase beta subunit family. Type 1 subfamily. As to quaternary structure, tetramer of two alpha and two beta subunits. Mg(2+) is required as a cofactor.

The protein resides in the cytoplasm. It catalyses the reaction tRNA(Phe) + L-phenylalanine + ATP = L-phenylalanyl-tRNA(Phe) + AMP + diphosphate + H(+). This is Phenylalanine--tRNA ligase beta subunit from Wolinella succinogenes (strain ATCC 29543 / DSM 1740 / CCUG 13145 / JCM 31913 / LMG 7466 / NCTC 11488 / FDC 602W) (Vibrio succinogenes).